The following is a 249-amino-acid chain: 3-deoxy-D-manno-octulosonic acid kinase (249 aa).

Asp175 is a catalytic residue.

This sequence belongs to the protein kinase superfamily. KdkA/RfaP family.

The protein resides in the cell inner membrane. It carries out the reaction an alpha-Kdo-(2-&gt;6)-lipid IVA + ATP = a 4-O-phospho-alpha-Kdo-(2-&gt;6)-lipid IVA + ADP + H(+). The protein operates within bacterial outer membrane biogenesis; LPS core biosynthesis. Catalyzes the ATP-dependent phosphorylation of the 3-deoxy-D-manno-octulosonic acid (Kdo) residue in Kdo-lipid IV(A) at the 4-OH position. This is 3-deoxy-D-manno-octulosonic acid kinase from Xanthomonas oryzae pv. oryzae (strain PXO99A).